A 976-amino-acid chain; its full sequence is Dolichyl-phosphooligosaccharide-protein glycotransferase 1 (976 aa).

The Cytoplasmic segment spans residues 1 to 21; the sequence is MVKSKVKKVEKGKEGEEKRST. A helical transmembrane segment spans residues 22–42; that stretch reads YVLLKKVLIPILVFGFAIYAF. At 43–112 the chain is on the extracellular side; it reads YLRHLTAGKY…KVVSLFGYNE (70 aa). The DXD motif 1 motif lies at 55–57; it reads DPD. Aspartate 57 lines the Mn(2+) pocket. Residues 113–133 form a helical membrane-spanning segment; the sequence is LQAFLLWPPFVGFLGVIAVYL. The Cytoplasmic segment spans residues 134–135; it reads LG. Residues 136 to 156 traverse the membrane as a helical segment; the sequence is RKVLNEWTGLWGAVVLTVSTA. Residues 157 to 165 are Extracellular-facing; the sequence is NFSRTFSGN. A helical membrane pass occupies residues 166 to 186; the sequence is ARGDGPFMALFIFASVAMLYY. Mn(2+) is bound by residues arginine 167 and aspartate 169. Positions 167-169 match the DXD motif 2 motif; sequence RGD. Topologically, residues 187–193 are cytoplasmic; that stretch reads LKESNKT. Residues 194 to 214 traverse the membrane as a helical segment; sequence RKIIYGTLFVLLTVISLGAWN. Position 215 (glycine 215) is a topological domain, extracellular. A helical transmembrane segment spans residues 216–236; the sequence is SPFGLMVLLGFASLQTIILFI. Residues 237-247 lie on the Cytoplasmic side of the membrane; sequence FGKLEELKKFV. Residues 248-268 form a helical membrane-spanning segment; sequence KEFYPAYLAILAFGYALTFPG. A topological domain (extracellular) is located at residue isoleucine 269. A helical membrane pass occupies residues 270 to 290; sequence VKIGGFIRFAFEVFLGLIFLL. Over 291-306 the chain is Cytoplasmic; that stretch reads VIMLYGGRYLNYSDKK. The chain crosses the membrane as a helical span at residues 307–327; it reads HRFLVVTIIVLLGFGGAYAYV. The Extracellular portion of the chain corresponds to 328-360; the sequence is GPKLFRLMGGAYQSTQVYETVQELAKTTIGDVK. Residues 347–350 carry the TIXE motif motif; that stretch reads TVQE. A helical transmembrane segment spans residues 361 to 381; the sequence is AYYGVESGNGLIFFLSIPGLL. Residues 382-396 lie on the Cytoplasmic side of the membrane; sequence ILLTKYLYDLFKKAK. Residues 397-417 traverse the membrane as a helical segment; sequence SDNETLFALVFYTMSLYLLYL. Residue alanine 418 is a topological domain, extracellular. A helical transmembrane segment spans residues 419 to 439; that stretch reads VRFLFLASYAVALFFGIFIGF. Residue arginine 420 coordinates a glycophospholipid. Residues 440–453 are Cytoplasmic-facing; it reads SMDVIEKMKENIGI. A helical transmembrane segment spans residues 454 to 474; the sequence is KAALGIVLSLMILVIPFVHAP. The Extracellular segment spans residues 475 to 976; that stretch reads VLARSARALK…SASAPHHSSE (502 aa). Positions 513 to 515 are interacts with target acceptor peptide in protein substrate; it reads WWD. Positions 513 to 517 match the WWDYG motif motif; that stretch reads WWDYG. Tyrosine 518 contributes to the a glycophospholipid binding site. The short motif at 573-580 is the DK motif element; the sequence is DWAKFNAI.

The protein belongs to the STT3 family. Mn(2+) is required as a cofactor. It depends on Mg(2+) as a cofactor.

The protein resides in the cell membrane. It catalyses the reaction an archaeal dolichyl phosphooligosaccharide + [protein]-L-asparagine = an archaeal dolichyl phosphate + a glycoprotein with the oligosaccharide chain attached by N-beta-D-glycosyl linkage to a protein L-asparagine.. It participates in protein modification; protein glycosylation. In terms of biological role, oligosaccharyl transferase (OST) that catalyzes the initial transfer of a defined glycan (ManNAcXyl(2)GlcAMan(2)GalNAc in Pyrococcus) from the lipid carrier dolichol-monophosphate to an asparagine residue within an Asn-X-Ser/Thr consensus motif in nascent polypeptide chains, the first step in protein N-glycosylation. The polypeptide is Dolichyl-phosphooligosaccharide-protein glycotransferase 1 (aglB1) (Pyrococcus horikoshii (strain ATCC 700860 / DSM 12428 / JCM 9974 / NBRC 100139 / OT-3)).